The chain runs to 449 residues: Trigger factor (449 aa).

Residues 162 to 243 (GEFVTINITA…ITATKQRELP (82 aa)) enclose the PPIase FKBP-type domain. Residues 428–437 (GNEIDPKEYF) show a composition bias toward basic and acidic residues. The disordered stretch occupies residues 428–449 (GNEIDPKEYFGEEEVAETESEA). Residues 438-449 (GEEEVAETESEA) are compositionally biased toward acidic residues.

It belongs to the FKBP-type PPIase family. Tig subfamily.

It localises to the cytoplasm. It carries out the reaction [protein]-peptidylproline (omega=180) = [protein]-peptidylproline (omega=0). Its function is as follows. Involved in protein export. Acts as a chaperone by maintaining the newly synthesized protein in an open conformation. Functions as a peptidyl-prolyl cis-trans isomerase. The chain is Trigger factor from Corynebacterium glutamicum (strain R).